Consider the following 286-residue polypeptide: Phosphatidylserine decarboxylase proenzyme (286 aa).

Active-site charge relay system; for autoendoproteolytic cleavage activity residues include D90, H147, and S250. S250 acts as the Schiff-base intermediate with substrate; via pyruvic acid; for decarboxylase activity in catalysis. At S250 the chain carries Pyruvic acid (Ser); by autocatalysis.

This sequence belongs to the phosphatidylserine decarboxylase family. PSD-B subfamily. Prokaryotic type I sub-subfamily. In terms of assembly, heterodimer of a large membrane-associated beta subunit and a small pyruvoyl-containing alpha subunit. The cofactor is pyruvate. Post-translationally, is synthesized initially as an inactive proenzyme. Formation of the active enzyme involves a self-maturation process in which the active site pyruvoyl group is generated from an internal serine residue via an autocatalytic post-translational modification. Two non-identical subunits are generated from the proenzyme in this reaction, and the pyruvate is formed at the N-terminus of the alpha chain, which is derived from the carboxyl end of the proenzyme. The autoendoproteolytic cleavage occurs by a canonical serine protease mechanism, in which the side chain hydroxyl group of the serine supplies its oxygen atom to form the C-terminus of the beta chain, while the remainder of the serine residue undergoes an oxidative deamination to produce ammonia and the pyruvoyl prosthetic group on the alpha chain. During this reaction, the Ser that is part of the protease active site of the proenzyme becomes the pyruvoyl prosthetic group, which constitutes an essential element of the active site of the mature decarboxylase.

The protein resides in the cell membrane. It catalyses the reaction a 1,2-diacyl-sn-glycero-3-phospho-L-serine + H(+) = a 1,2-diacyl-sn-glycero-3-phosphoethanolamine + CO2. It participates in phospholipid metabolism; phosphatidylethanolamine biosynthesis; phosphatidylethanolamine from CDP-diacylglycerol: step 2/2. Functionally, catalyzes the formation of phosphatidylethanolamine (PtdEtn) from phosphatidylserine (PtdSer). The chain is Phosphatidylserine decarboxylase proenzyme from Saccharophagus degradans (strain 2-40 / ATCC 43961 / DSM 17024).